A 348-amino-acid chain; its full sequence is MENKGEKIAMNPTVQTLAQKGDKLAVKLVTRGWASLSTNQKRRAEMLAGYTPAILAFTPRRPRMTNSPPRTSRNSPGQAGKSMTMSKTELLCTVKGTTGVIPSFEDWVVSPRNVAVFPQLSLLATNFNKYRITALTVKYSPACSFETNGRVALGFNDDASDTPPTTKVGFYDLGKHVETAAQTAKDLVIPVDGKTRFIRDSASDDAKLVDFGRLVLSTYGFDKADTVVGELFIQYTIVLSDPTKTAKISQASNDKVSDGPTYVVPSVNGNELQLRVVAAGKWCIIVRGTVEGGFTKPTLIGPGISGDVDYESARPIAICELVTQMEGQMLKITKTSAEQPLKVVVYRM.

Residues Thr-58–Thr-84 form a disordered region. The segment covering Met-64–Thr-84 has biased composition (polar residues). The s domain, virion shell stretch occupies residues Ser-82–Leu-239. The tract at residues Ser-240–Met-348 is p domain, projecting.

This sequence belongs to the icosahedral plant coat protein family. In terms of assembly, homodimer. Homomultimer. Ca(2+) is required as a cofactor.

The protein localises to the virion. In terms of biological role, capsid protein self-assembles to form an icosahedral capsid with a T=3 symmetry, about 32-35 nm in diameter, and consisting of 180 capsid proteins. Also acts as a suppressor of RNA-mediated gene silencing, also known as post-transcriptional gene silencing (PTGS), a mechanism of plant viral defense that limits the accumulation of viral RNAs. The chain is Capsid protein from Carnation mottle virus (isolate China/Shanghai) (CarMV).